The sequence spans 67 residues: MTLPKILDVIQMDDSSLSEEIIAIKRQLFDLRLKRATRQDFKPHLFKHSKHRLAQLLTVEKSRAQSN.

The protein belongs to the universal ribosomal protein uL29 family.

Its subcellular location is the plastid. It localises to the chloroplast. The chain is Large ribosomal subunit protein uL29c (rpl29) from Porphyra purpurea (Red seaweed).